The sequence spans 190 residues: CASP-like protein 1E2 (190 aa).

Over residues 1–12 (MENEGKNNMNGM) the composition is skewed to low complexity. The segment at 1–24 (MENEGKNNMNGMEMEKGKRESRSR) is disordered. The Cytoplasmic portion of the chain corresponds to 1–28 (MENEGKNNMNGMEMEKGKRESRSRKGVE). Residues 13 to 24 (EMEKGKRESRSR) are compositionally biased toward basic and acidic residues. The helical transmembrane segment at 29-49 (LTMRVLALVLTMAAATVLGVA) threads the bilayer. Over 50–83 (KQTKVVSIKLIPALPPLDITTTAKASYLSAFVYN) the chain is Extracellular. A helical membrane pass occupies residues 84–104 (ISANAIACGYTAISIAILMIS). Topologically, residues 105-111 (RGRRSKK) are cytoplasmic. Residues 112 to 132 (LLMAVLLGDLVMVALLFSGTG) form a helical membrane-spanning segment. Topologically, residues 133-163 (AASAIGLMGLQGNKHVMWNKVCGVFGKFCHR) are extracellular. A helical transmembrane segment spans residues 164 to 184 (AAPSLPLTFLAAVVFMFLVVL). Over 185–190 (DAIKLP) the chain is Cytoplasmic.

The protein belongs to the Casparian strip membrane proteins (CASP) family. Homodimer and heterodimers.

It localises to the cell membrane. The sequence is that of CASP-like protein 1E2 from Arabidopsis lyrata subsp. lyrata (Lyre-leaved rock-cress).